Reading from the N-terminus, the 317-residue chain is Flavin-dependent thymidylate synthase (317 aa).

S46 serves as a coordination point for FAD. Residues F55–T166 are insert. The ThyX domain occupies A100–I317. DUMP contacts are provided by residues Q178–R181, E189–R193, and R259. FAD-binding positions include R181–R183 and E189. The ThyX motif signature appears at R181–S191. N281 provides a ligand contact to FAD. R286 contributes to the dUMP binding site. Catalysis depends on R286, which acts as the Involved in ionization of N3 of dUMP, leading to its activation.

The protein belongs to the thymidylate synthase ThyX family. As to quaternary structure, homotetramer. Requires FAD as cofactor.

It catalyses the reaction dUMP + (6R)-5,10-methylene-5,6,7,8-tetrahydrofolate + NADPH + H(+) = dTMP + (6S)-5,6,7,8-tetrahydrofolate + NADP(+). It participates in pyrimidine metabolism; dTTP biosynthesis. Functionally, catalyzes the reductive methylation of 2'-deoxyuridine-5'-monophosphate (dUMP) to 2'-deoxythymidine-5'-monophosphate (dTMP) while utilizing 5,10-methylenetetrahydrofolate (mTHF) as the methyl donor, and NADPH and FADH(2) as the reductant. The polypeptide is Flavin-dependent thymidylate synthase (Aquifex aeolicus (strain VF5)).